Reading from the N-terminus, the 479-residue chain is Ribulose bisphosphate carboxylase large chain (479 aa).

Residues 1–2 (MS) constitute a propeptide that is removed on maturation. The substrate site is built by N123 and T173. The Proton acceptor role is filled by K175. A substrate-binding site is contributed by K177. The Mg(2+) site is built by K201, D203, and E204. An N6-carboxylysine modification is found at K201. At S208 the chain carries Phosphoserine. Residue H294 is the Proton acceptor of the active site. 2 residues coordinate substrate: R295 and H327. T330 carries the phosphothreonine modification. Residue S379 participates in substrate binding.

This sequence belongs to the RuBisCO large chain family. Type I subfamily. In terms of assembly, heterohexadecamer of 8 large chains and 8 small chains; disulfide-linked. The disulfide link is formed within the large subunit homodimers. Mg(2+) is required as a cofactor. Post-translationally, the disulfide bond which can form in the large chain dimeric partners within the hexadecamer appears to be associated with oxidative stress and protein turnover.

The protein resides in the plastid. The protein localises to the chloroplast. It catalyses the reaction 2 (2R)-3-phosphoglycerate + 2 H(+) = D-ribulose 1,5-bisphosphate + CO2 + H2O. The catalysed reaction is D-ribulose 1,5-bisphosphate + O2 = 2-phosphoglycolate + (2R)-3-phosphoglycerate + 2 H(+). RuBisCO catalyzes two reactions: the carboxylation of D-ribulose 1,5-bisphosphate, the primary event in carbon dioxide fixation, as well as the oxidative fragmentation of the pentose substrate in the photorespiration process. Both reactions occur simultaneously and in competition at the same active site. This is Ribulose bisphosphate carboxylase large chain from Crucihimalaya wallichii (Rock-cress).